The sequence spans 222 residues: Ribonuclease T (222 aa).

The Exonuclease domain maps to 20-194 (VVIDVETAGF…YDTERTAELF (175 aa)). Mg(2+) contacts are provided by Asp-23, Glu-25, His-181, and Asp-186. His-181 (proton donor/acceptor) is an active-site residue.

This sequence belongs to the RNase T family. In terms of assembly, homodimer. Mg(2+) serves as cofactor.

Its function is as follows. Trims short 3' overhangs of a variety of RNA species, leaving a one or two nucleotide 3' overhang. Responsible for the end-turnover of tRNA: specifically removes the terminal AMP residue from uncharged tRNA (tRNA-C-C-A). Also appears to be involved in tRNA biosynthesis. The sequence is that of Ribonuclease T from Shewanella sp. (strain MR-4).